The chain runs to 330 residues: Aspartate--ammonia ligase (330 aa).

The protein belongs to the class-II aminoacyl-tRNA synthetase family. AsnA subfamily.

It localises to the cytoplasm. The catalysed reaction is L-aspartate + NH4(+) + ATP = L-asparagine + AMP + diphosphate + H(+). It participates in amino-acid biosynthesis; L-asparagine biosynthesis; L-asparagine from L-aspartate (ammonia route): step 1/1. The chain is Aspartate--ammonia ligase from Salmonella paratyphi A (strain ATCC 9150 / SARB42).